Reading from the N-terminus, the 439-residue chain is Membrane sensor protein UhpC (439 aa).

Residues Met-1–Arg-25 lie on the Cytoplasmic side of the membrane. Residues Tyr-26–Thr-45 form a helical membrane-spanning segment. At Arg-46–Asp-66 the chain is on the periplasmic side. Residues Ile-67–Ile-87 traverse the membrane as a helical segment. Residues Val-88 to Arg-95 lie on the Cytoplasmic side of the membrane. The chain crosses the membrane as a helical span at residues Tyr-96–Leu-118. Over Trp-119–Phe-121 the chain is Periplasmic. A helical transmembrane segment spans residues Ala-122–Thr-144. The Cytoplasmic segment spans residues Ala-145–Ala-162. A helical transmembrane segment spans residues His-163 to Trp-183. A topological domain (periplasmic) is located at residue Arg-184. The chain crosses the membrane as a helical span at residues Ala-185–Leu-205. The Cytoplasmic portion of the chain corresponds to Arg-206 to Lys-244. The helical transmembrane segment at Tyr-245 to Val-265 threads the bilayer. Residues Arg-266–Asn-289 are Periplasmic-facing. A helical transmembrane segment spans residues Thr-290–Ser-310. Topologically, residues Asp-311–Asn-322 are cytoplasmic. The helical transmembrane segment at Leu-323–Ser-343 threads the bilayer. Residues Tyr-344–Thr-349 lie on the Periplasmic side of the membrane. The chain crosses the membrane as a helical span at residues Cys-350–Ala-370. Over Glu-371–Gly-379 the chain is Cytoplasmic. Residues Ala-380 to Leu-400 traverse the membrane as a helical segment. Residues Ala-401–Ser-410 are Periplasmic-facing. Residues Gly-411–Leu-431 form a helical membrane-spanning segment. The Cytoplasmic portion of the chain corresponds to Asn-432–Ala-439.

The protein belongs to the major facilitator superfamily. Organophosphate:Pi antiporter (OPA) (TC 2.A.1.4) family.

It localises to the cell inner membrane. Its function is as follows. Part of the UhpABC signaling cascade that controls the expression of the hexose phosphate transporter UhpT. UhpC senses external glucose-6-phosphate and interacts with the histidine kinase UhpB, leading to the stimulation of the autokinase activity of UhpB. This is Membrane sensor protein UhpC from Escherichia coli (strain K12).